Consider the following 298-residue polypeptide: Tyrosine recombinase XerC (298 aa).

Residues 1–84 enclose the Core-binding (CB) domain; sequence MNHIQEAFLN…TLRTFYEYWM (84 aa). Positions 105 to 286 constitute a Tyr recombinase domain; sequence YLPQFFYEEE…SNQQLRKVYL (182 aa). Active-site residues include Arg-145, Lys-169, His-238, Arg-241, and His-264. Tyr-273 functions as the O-(3'-phospho-DNA)-tyrosine intermediate in the catalytic mechanism.

Belongs to the 'phage' integrase family. XerC subfamily. In terms of assembly, forms a cyclic heterotetrameric complex composed of two molecules of XerC and two molecules of XerD.

It is found in the cytoplasm. Site-specific tyrosine recombinase, which acts by catalyzing the cutting and rejoining of the recombining DNA molecules. The XerC-XerD complex is essential to convert dimers of the bacterial chromosome into monomers to permit their segregation at cell division. It also contributes to the segregational stability of plasmids. This Staphylococcus aureus (strain MRSA252) protein is Tyrosine recombinase XerC.